A 179-amino-acid polypeptide reads, in one-letter code: ATP synthase subunit delta (179 aa).

It belongs to the ATPase delta chain family. F-type ATPases have 2 components, F(1) - the catalytic core - and F(0) - the membrane proton channel. F(1) has five subunits: alpha(3), beta(3), gamma(1), delta(1), epsilon(1). F(0) has three main subunits: a(1), b(2) and c(10-14). The alpha and beta chains form an alternating ring which encloses part of the gamma chain. F(1) is attached to F(0) by a central stalk formed by the gamma and epsilon chains, while a peripheral stalk is formed by the delta and b chains.

It is found in the cell membrane. Functionally, f(1)F(0) ATP synthase produces ATP from ADP in the presence of a proton or sodium gradient. F-type ATPases consist of two structural domains, F(1) containing the extramembraneous catalytic core and F(0) containing the membrane proton channel, linked together by a central stalk and a peripheral stalk. During catalysis, ATP synthesis in the catalytic domain of F(1) is coupled via a rotary mechanism of the central stalk subunits to proton translocation. In terms of biological role, this protein is part of the stalk that links CF(0) to CF(1). It either transmits conformational changes from CF(0) to CF(1) or is implicated in proton conduction. The polypeptide is ATP synthase subunit delta (Clostridium perfringens (strain SM101 / Type A)).